Consider the following 93-residue polypeptide: MSQFSVLNVGFGNIVLVSKIVSIIHSDSASAKRIRNEAKSNNSLIDATQGKKTRSIIVTDSNHLILSNLRVESLTKRIESRDNSIASEEEDLD.

This sequence belongs to the RemA family.

This Leptospira interrogans serogroup Icterohaemorrhagiae serovar Lai (strain 56601) protein is Putative regulatory protein LA_2599.